Here is a 262-residue protein sequence, read N- to C-terminus: Probable lipoprotein EnvF (262 aa).

The N-terminal stretch at Met1–Ala25 is a signal peptide. Cys26 carries the N-palmitoyl cysteine lipid modification. Cys26 carries S-diacylglycerol cysteine lipidation. Residues Glu227–Lys262 form a disordered region. Residues Gln237–Arg246 show a composition bias toward basic and acidic residues.

It localises to the cell membrane. The protein is Probable lipoprotein EnvF (envF) of Salmonella typhimurium (strain LT2 / SGSC1412 / ATCC 700720).